The primary structure comprises 83 residues: Small ribosomal subunit protein uS17 (83 aa).

This sequence belongs to the universal ribosomal protein uS17 family. In terms of assembly, part of the 30S ribosomal subunit.

In terms of biological role, one of the primary rRNA binding proteins, it binds specifically to the 5'-end of 16S ribosomal RNA. The protein is Small ribosomal subunit protein uS17 of Buchnera aphidicola subsp. Acyrthosiphon pisum (strain 5A).